The sequence spans 319 residues: Cell surface A33 antigen (319 aa).

An N-terminal signal peptide occupies residues 1–21 (MLGKAGSVVWMLCAIWVAADA). Residues 22–134 (LTVETTQDIL…QDVNAKSRVR (113 aa)) enclose the Ig-like V-type domain. Residues 22-235 (LTVETTQDIL…VAPRPPSMNI (214 aa)) lie on the Extracellular side of the membrane. 3 disulfides stabilise this stretch: Cys43–Cys117, Cys146–Cys222, and Cys162–Cys211. Residues Asn99, Asn112, Asn200, and Asn223 are each glycosylated (N-linked (GlcNAc...) asparagine). The 88-residue stretch at 140–227 (PPSKPDCSIQ…GIESCNITVA (88 aa)) folds into the Ig-like C2-type domain. Residues 236 to 256 (ALYAGIAGGVFVALIIIGVIV) form a helical membrane-spanning segment. Residues 257–319 (YCCCCREKDD…GRSTPDQPFQ (63 aa)) lie on the Cytoplasmic side of the membrane. Basic and acidic residues-rich tracts occupy residues 267–276 (KDQDREDARP) and 284–308 (PKKEQKEISRGREDEDDHRHEDRWS). The segment at 267–319 (KDQDREDARPNRAAYQVPKKEQKEISRGREDEDDHRHEDRWSSGRSTPDQPFQ) is disordered. The span at 309–319 (SGRSTPDQPFQ) shows a compositional bias: polar residues.

Post-translationally, palmitoylated.

The protein resides in the membrane. In terms of biological role, may play a role in cell-cell recognition and signaling. The protein is Cell surface A33 antigen (Gpa33) of Mus musculus (Mouse).